The chain runs to 80 residues: MAGGPRRGGRRRKKVCYFTANGITHIDYKDTELLKRFISERGKILPRRVTGTSAKYQRMLTTAIKRARHMALLPYVKEEQ.

The protein belongs to the bacterial ribosomal protein bS18 family. Part of the 30S ribosomal subunit. Forms a tight heterodimer with protein bS6.

In terms of biological role, binds as a heterodimer with protein bS6 to the central domain of the 16S rRNA, where it helps stabilize the platform of the 30S subunit. The sequence is that of Small ribosomal subunit protein bS18 from Staphylococcus epidermidis (strain ATCC 35984 / DSM 28319 / BCRC 17069 / CCUG 31568 / BM 3577 / RP62A).